The sequence spans 114 residues: Fumarate reductase subunit D (114 aa).

Helical transmembrane passes span 24–44 (VSAI…PFGL), 50–70 (LITF…TIFP), and 92–112 (GGFI…FAVI).

The protein belongs to the FrdD family. Part of an enzyme complex containing four subunits: a flavoprotein (FrdA), an iron-sulfur protein (FrdB), and two hydrophobic anchor proteins (FrdC and FrdD).

It is found in the cell inner membrane. Its function is as follows. Anchors the catalytic components of the fumarate reductase complex to the cell membrane, binds quinones. This is Fumarate reductase subunit D from Haemophilus influenzae (strain 86-028NP).